Consider the following 84-residue polypeptide: Delta-thalatoxin-Cad1a (84 aa).

The first 19 residues, 1-19 (MAYLKIVLVALMLVLAVSA), serve as a signal peptide directing secretion. The propeptide occupies 20-33 (MRRPDQQDQDISVA). Intrachain disulfides connect Cys38-Cys78, Cys40-Cys68, and Cys61-Cys79.

Belongs to the sea anemone sodium channel inhibitory toxin family. Type II subfamily.

The protein resides in the secreted. It is found in the nematocyst. In terms of biological role, binds specifically to the voltage-gated sodium channel (Nav) and delays its inactivation. The chain is Delta-thalatoxin-Cad1a from Cryptodendrum adhaesivum (Adhesive sea anemone).